The following is a 387-amino-acid chain: Succinate--CoA ligase [ADP-forming] subunit beta (387 aa).

Residues 9 to 236 (KELFAKHNVP…KDATDPLELK (228 aa)) form the ATP-grasp domain. Residues K45, 52 to 54 (GRG), S94, and E99 each bind ATP. Mg(2+) contacts are provided by N191 and D205. Substrate contacts are provided by residues N256 and 318–320 (GIT).

It belongs to the succinate/malate CoA ligase beta subunit family. In terms of assembly, heterotetramer of two alpha and two beta subunits. It depends on Mg(2+) as a cofactor.

It catalyses the reaction succinate + ATP + CoA = succinyl-CoA + ADP + phosphate. The enzyme catalyses GTP + succinate + CoA = succinyl-CoA + GDP + phosphate. It functions in the pathway carbohydrate metabolism; tricarboxylic acid cycle; succinate from succinyl-CoA (ligase route): step 1/1. In terms of biological role, succinyl-CoA synthetase functions in the citric acid cycle (TCA), coupling the hydrolysis of succinyl-CoA to the synthesis of either ATP or GTP and thus represents the only step of substrate-level phosphorylation in the TCA. The beta subunit provides nucleotide specificity of the enzyme and binds the substrate succinate, while the binding sites for coenzyme A and phosphate are found in the alpha subunit. The protein is Succinate--CoA ligase [ADP-forming] subunit beta of Mycolicibacterium gilvum (strain PYR-GCK) (Mycobacterium gilvum (strain PYR-GCK)).